The following is a 261-amino-acid chain: Small ribosomal subunit protein eS4 (261 aa).

Positions 42–104 (LPLVIFLRNR…TGEFFRLIYD (63 aa)) constitute an S4 RNA-binding domain.

The protein belongs to the eukaryotic ribosomal protein eS4 family.

The protein is Small ribosomal subunit protein eS4 (RpS4) of Carabus granulatus (Ground beetle).